Here is a 65-residue protein sequence, read N- to C-terminus: Large ribosomal subunit protein bL35 (65 aa).

Over residues 1–15 (MPKMKTKKSASKRFT) the composition is skewed to basic residues. Disordered stretches follow at residues 1 to 26 (MPKM…KRGQ) and 38 to 65 (TKNK…MPYA). The span at 45-54 (RGTEGVHETN) shows a compositional bias: basic and acidic residues.

The protein belongs to the bacterial ribosomal protein bL35 family.

The protein is Large ribosomal subunit protein bL35 of Ralstonia pickettii (strain 12J).